A 221-amino-acid chain; its full sequence is Pyridoxine/pyridoxamine 5'-phosphate oxidase (221 aa).

Substrate-binding positions include 14-17 (RNEY) and K73. FMN-binding positions include 68 to 73 (RTVLLK), 83 to 84 (FT), K90, and Q112. Y130, R134, and S138 together coordinate substrate. FMN contacts are provided by residues 147–148 (QS) and W193. 199–201 (RLH) contributes to the substrate binding site. R203 lines the FMN pocket.

The protein belongs to the pyridoxamine 5'-phosphate oxidase family. Homodimer. The cofactor is FMN.

The catalysed reaction is pyridoxamine 5'-phosphate + O2 + H2O = pyridoxal 5'-phosphate + H2O2 + NH4(+). It carries out the reaction pyridoxine 5'-phosphate + O2 = pyridoxal 5'-phosphate + H2O2. Its pathway is cofactor metabolism; pyridoxal 5'-phosphate salvage; pyridoxal 5'-phosphate from pyridoxamine 5'-phosphate: step 1/1. It participates in cofactor metabolism; pyridoxal 5'-phosphate salvage; pyridoxal 5'-phosphate from pyridoxine 5'-phosphate: step 1/1. Functionally, catalyzes the oxidation of either pyridoxine 5'-phosphate (PNP) or pyridoxamine 5'-phosphate (PMP) into pyridoxal 5'-phosphate (PLP). The polypeptide is Pyridoxine/pyridoxamine 5'-phosphate oxidase (Salinispora arenicola (strain CNS-205)).